The primary structure comprises 319 residues: MAQPSNYWKQDVLPLSILMLTLVATECTIGIIASGIVMAVNAVSWVQKKAISITTRILLLLSVSRIGLQSIMLIEITSSIFNVAFYNSVLYRVSNVSFVFLNYCSLWFAALLSFFHFVKIANFSYPLFFKLKWRISELMPWLLWLSVFISFSSSMFFSKHKFTVNNNNSLSNNICNFTMKLYVVETNVVNVSFLFISGILPPLTMFVATATLLIFSLRRHTLNMRNSATGSRNPCIEAHMQAIKETSCFLFLYILNAAALLLSTSNIVDASLFWSIVIRIVLPVYPAGHSVLLIQNNPGLRRTWKHLQSQIHLYLQNRF.

Over 1–16 (MAQPSNYWKQDVLPLS) the chain is Extracellular. A helical membrane pass occupies residues 17 to 37 (ILMLTLVATECTIGIIASGIV). The Cytoplasmic portion of the chain corresponds to 38-65 (MAVNAVSWVQKKAISITTRILLLLSVSR). Residues 66 to 86 (IGLQSIMLIEITSSIFNVAFY) form a helical membrane-spanning segment. Residues 87 to 97 (NSVLYRVSNVS) are Extracellular-facing. N95 is a glycosylation site (N-linked (GlcNAc...) asparagine). Residues 98 to 118 (FVFLNYCSLWFAALLSFFHFV) traverse the membrane as a helical segment. At 119–137 (KIANFSYPLFFKLKWRISE) the chain is on the cytoplasmic side. A helical transmembrane segment spans residues 138–158 (LMPWLLWLSVFISFSSSMFFS). Over 159 to 194 (KHKFTVNNNNSLSNNICNFTMKLYVVETNVVNVSFL) the chain is Extracellular. N167, N176, and N190 each carry an N-linked (GlcNAc...) asparagine glycan. The chain crosses the membrane as a helical span at residues 195-215 (FISGILPPLTMFVATATLLIF). Topologically, residues 216–247 (SLRRHTLNMRNSATGSRNPCIEAHMQAIKETS) are cytoplasmic. Residues 248–268 (CFLFLYILNAAALLLSTSNIV) form a helical membrane-spanning segment. Residues 269-273 (DASLF) lie on the Extracellular side of the membrane. A helical membrane pass occupies residues 274–294 (WSIVIRIVLPVYPAGHSVLLI). The Cytoplasmic segment spans residues 295–319 (QNNPGLRRTWKHLQSQIHLYLQNRF).

The protein belongs to the G-protein coupled receptor T2R family.

The protein resides in the membrane. In terms of biological role, putative taste receptor which may play a role in the perception of bitterness. In Mus musculus (Mouse), this protein is Taste receptor type 2 member 39 (Tas2r39).